A 570-amino-acid polypeptide reads, in one-letter code: MSSEKVLVGEYLFTRLLQLGIKSILGVPGDFNLALLDLIEKVGDETFRWVGNENELNGAYAADAYARVKGISAIVTTFGVGELSALNGFAGAYSERIPVVHIVGVPNTKAQATRPLLHHTLGNGDFKVFQRMSSELSADVAFLDSGDSAGRLIDNLLETCVRTSRPVYLAVPSDAGYFYTDASPLKTPLVFPVPENNKEIEHEVVSEILELIEKSKNPSILVDACVSRFHIQQETQDFIDATHFPTYVTPMGKTAINESSPYFDGVYIGSLTEPSIKERAESTDLLLIIGGLRSDFNSGTFTYATPASQTIEFHSDYTKIRSGVYEGISMKHLLPKLTAAIDKKSVQAKARPVHFEPPKAVAAEGYAEGTITHKWFWPTFASFLRESDVVTTETGTSNFGILDCIFPKGCQNLSQVLWGSIGWSVGAMFGATLGIKDSDAPHRRSILIVGDGSLHLTVQEISATIRNGLTPIIFVINNKGYTIERLIHGLHAVYNDINTEWDYQNLLKGYGAKNSRSYNIHSEKELLDLFKDEEFGKADVIQLVEVHMPVLDAPRVLIEQAKLTASLNKQ.

Positions 30 and 119 each coordinate pyruvate. Thiamine diphosphate is bound by residues Thr396 and 419-421 (GSI). Asp451 contributes to the Mg(2+) binding site. Residues 452 to 453 (GS) and 478 to 483 (NKGYTI) each bind thiamine diphosphate. Mg(2+)-binding residues include Asn478 and Gly480. Glu484 contributes to the pyruvate binding site.

This sequence belongs to the TPP enzyme family. Homotetramer. Mg(2+) serves as cofactor. The cofactor is thiamine diphosphate.

It is found in the cytoplasm. It localises to the nucleus. It catalyses the reaction a 2-oxocarboxylate + H(+) = an aldehyde + CO2. It carries out the reaction pyruvate + H(+) = acetaldehyde + CO2. This chain is Putative pyruvate decarboxylase C3G9.11c, found in Schizosaccharomyces pombe (strain 972 / ATCC 24843) (Fission yeast).